We begin with the raw amino-acid sequence, 255 residues long: Acetylglutamate kinase (255 aa).

Residues 40 to 41, arginine 62, and asparagine 153 contribute to the substrate site; that span reads GG.

It belongs to the acetylglutamate kinase family. ArgB subfamily.

It localises to the cytoplasm. It carries out the reaction N-acetyl-L-glutamate + ATP = N-acetyl-L-glutamyl 5-phosphate + ADP. It participates in amino-acid biosynthesis; L-arginine biosynthesis; N(2)-acetyl-L-ornithine from L-glutamate: step 2/4. In terms of biological role, catalyzes the ATP-dependent phosphorylation of N-acetyl-L-glutamate. This is Acetylglutamate kinase from Bacillus thuringiensis (strain Al Hakam).